The sequence spans 272 residues: Cytochrome c1 (272 aa).

An N-terminal signal peptide occupies residues 1 to 24 (MTTIVKRALVAAGMVLAIGGAAQA). Residues Cys61, Cys64, His65, and Met200 each coordinate heme c. Residues 244 to 261 (LGLKVLLFLGVLTAMLLA) traverse the membrane as a helical segment.

The main subunits of complex b-c1 are: cytochrome b, cytochrome c1 and the Rieske protein. In terms of processing, binds 1 heme c group covalently per subunit.

The protein resides in the cell membrane. In terms of biological role, component of the ubiquinol-cytochrome c reductase complex (complex III or cytochrome b-c1 complex), which is a respiratory chain that generates an electrochemical potential coupled to ATP synthesis. This is Cytochrome c1 (petC) from Rhodospirillum rubrum.